Reading from the N-terminus, the 61-residue chain is MAKTALKNKAAAKPKFKVRAYTRCQVCGRPHSVYRKFGLCRICLREKAHRGELPGVTKSSW.

The Zn(2+) site is built by C24, C27, C40, and C43.

Belongs to the universal ribosomal protein uS14 family. Zinc-binding uS14 subfamily. As to quaternary structure, part of the 30S ribosomal subunit. Contacts proteins S3 and S10. Zn(2+) serves as cofactor.

In terms of biological role, binds 16S rRNA, required for the assembly of 30S particles and may also be responsible for determining the conformation of the 16S rRNA at the A site. In Bifidobacterium adolescentis (strain ATCC 15703 / DSM 20083 / NCTC 11814 / E194a), this protein is Small ribosomal subunit protein uS14.